Consider the following 216-residue polypeptide: DNA repair and recombination protein RadB (216 aa).

It belongs to the eukaryotic RecA-like protein family. RadB subfamily.

Involved in DNA repair and in homologous recombination. May regulate the cleavage reactions of the branch-structured DNA. Has a very weak ATPase activity that is not stimulated by DNA. Binds DNA but does not promote DNA strands exchange. The chain is DNA repair and recombination protein RadB from Methanococcus maripaludis (strain C5 / ATCC BAA-1333).